A 408-amino-acid polypeptide reads, in one-letter code: LL-diaminopimelate aminotransferase (408 aa).

Substrate contacts are provided by Tyr-15 and Gly-42. Pyridoxal 5'-phosphate contacts are provided by residues Tyr-72, 108–109 (SK), Tyr-132, Asn-187, Tyr-218, and 246–248 (SFS). Substrate is bound by residues Lys-109, Tyr-132, and Asn-187. Lys-249 carries the N6-(pyridoxal phosphate)lysine modification. Arg-257 and Asn-292 together coordinate pyridoxal 5'-phosphate. The substrate site is built by Asn-292 and Arg-388.

This sequence belongs to the class-I pyridoxal-phosphate-dependent aminotransferase family. LL-diaminopimelate aminotransferase subfamily. In terms of assembly, homodimer. Pyridoxal 5'-phosphate serves as cofactor.

The enzyme catalyses (2S,6S)-2,6-diaminopimelate + 2-oxoglutarate = (S)-2,3,4,5-tetrahydrodipicolinate + L-glutamate + H2O + H(+). It functions in the pathway amino-acid biosynthesis; L-lysine biosynthesis via DAP pathway; LL-2,6-diaminopimelate from (S)-tetrahydrodipicolinate (aminotransferase route): step 1/1. Its function is as follows. Involved in the synthesis of meso-diaminopimelate (m-DAP or DL-DAP), required for both lysine and peptidoglycan biosynthesis. Catalyzes the direct conversion of tetrahydrodipicolinate to LL-diaminopimelate. Is also able to catalyze the reverse reaction in vitro, i.e. the transamination of LL-diaminopimelate with 2-oxoglutarate to produce tetrahydrodipicolinate and glutamate. Cannot use m-DAP, lysine or ornithine as the amino-group donor, when using 2-oxoglutarate as the amino-group acceptor. Cannot use pyruvate, indole 3-pyruvate, oxaloacetate or phenyl pyruvate as the amino-group acceptor, when using LL-DAP as the amino-group donor. In Leptospira interrogans serogroup Icterohaemorrhagiae serovar copenhageni (strain Fiocruz L1-130), this protein is LL-diaminopimelate aminotransferase.